We begin with the raw amino-acid sequence, 276 residues long: Type II pantothenate kinase (276 aa).

Asp-8–Lys-15 is an ATP binding site. Glu-76 acts as the Proton acceptor in catalysis. Residues Thr-105, Gly-127–Met-131, Phe-143, and Ser-230 contribute to the ATP site.

The protein belongs to the type II pantothenate kinase family. As to quaternary structure, homodimer.

It localises to the cytoplasm. The enzyme catalyses (R)-pantothenate + ATP = (R)-4'-phosphopantothenate + ADP + H(+). The protein operates within cofactor biosynthesis; coenzyme A biosynthesis; CoA from (R)-pantothenate: step 1/5. Catalyzes the phosphorylation of pantothenate (Pan), the first step in CoA biosynthesis. In Bacillus cereus (strain ZK / E33L), this protein is Type II pantothenate kinase.